The chain runs to 108 residues: Nucleoid-associated protein HEAR1046 (108 aa).

Residues 86-108 form a disordered region; it reads TSQEKMAGATAGMPMPPGFKMPF. Residues 99 to 108 are compositionally biased toward pro residues; the sequence is PMPPGFKMPF.

This sequence belongs to the YbaB/EbfC family. In terms of assembly, homodimer.

The protein resides in the cytoplasm. It is found in the nucleoid. Its function is as follows. Binds to DNA and alters its conformation. May be involved in regulation of gene expression, nucleoid organization and DNA protection. This is Nucleoid-associated protein HEAR1046 from Herminiimonas arsenicoxydans.